We begin with the raw amino-acid sequence, 1058 residues long: Bromodomain-containing protein 1 (1058 aa).

Residues 1–12 (MRRKGRCHRGSA) are compositionally biased toward basic residues. The tract at residues 1–26 (MRRKGRCHRGSAARHPSSPCSVKHSP) is disordered. An interaction with KAT7/HBO1 and histones region spans residues 31-80 (LTYAQAQRMVEIEIEGRLHRISIFDPLEIILEDDLTAQEMSECNSNKENS). A disordered region spans residues 92–116 (HKNNRVKKKNEALPSAHGTPASASA). Ser-128 carries the post-translational modification Phosphoserine. The PHD-type 1 zinc-finger motif lies at 214–264 (DAVCCICMDGECQNSNVILFCDMCNLAVHQECYGVPYIPEGQWLCRHCLQS). The C2HC pre-PHD-type zinc finger occupies 268–301 (PADCVLCPNKGGAFKKTDDDRWGHVVCALWIPEV). The segment at 325–389 (LTCYLCKQKG…RKTAYCDVHT (65 aa)) adopts a PHD-type 2 zinc-finger fold. Residues Lys-368, Lys-516, and Lys-519 each carry the N6-acetyllysine modification. Residues Lys-554 and Lys-594 each participate in a glycyl lysine isopeptide (Lys-Gly) (interchain with G-Cter in SUMO2) cross-link. Positions 562–666 (LRLTPLTVLL…DQGGVVLRQA (105 aa)) constitute a Bromo domain. Disordered regions lie at residues 755 to 776 (LSQQ…EEDG) and 791 to 868 (LETL…DSSF). Ser-803 carries the phosphoserine modification. A compositionally biased stretch (low complexity) spans 852–867 (SESSISSSNSPLCDSS). Lys-903 carries the N6-acetyllysine modification. Arg-906 carries the phosphoserine modification. Positions 929-1012 (PLKVVWAKCS…KSKMVPLGID (84 aa)) constitute a PWWP domain. Residues Ser-1052 and Ser-1055 each carry the phosphoserine modification.

Component of some HBO1 complex composed of KAT7/HBO1, MEAF6, ING4 and BRD1/BRPF2. Component of the MOZ/MORF complex composed at least of ING5, KAT6A, KAT6B, MEAF6 and one of BRPF1, BRD1/BRPF2 and BRPF3. Interacts (via PHD-type zinc finger domain) with unmodified histone H3. Interacts (via PWWP domain) with dimethylated and trimethylated 'Lys-79' on histone H3. In terms of tissue distribution, highly expressed in testis.

Its subcellular location is the nucleus. The protein resides in the chromosome. In terms of biological role, scaffold subunit of various histone acetyltransferase (HAT) complexes, such as the MOZ/MORF and HBO1 complexes, that acts as a regulator of hematopoiesis. Plays a key role in HBO1 complex by directing KAT7/HBO1 specificity towards histone H3 'Lys-14' acetylation (H3K14ac), thereby promoting erythroid differentiation. In Homo sapiens (Human), this protein is Bromodomain-containing protein 1.